A 156-amino-acid polypeptide reads, in one-letter code: Small ribosomal subunit protein uS7 (156 aa).

This sequence belongs to the universal ribosomal protein uS7 family. In terms of assembly, part of the 30S ribosomal subunit. Contacts proteins S9 and S11.

Functionally, one of the primary rRNA binding proteins, it binds directly to 16S rRNA where it nucleates assembly of the head domain of the 30S subunit. Is located at the subunit interface close to the decoding center, probably blocks exit of the E-site tRNA. The polypeptide is Small ribosomal subunit protein uS7 (Streptococcus mutans serotype c (strain ATCC 700610 / UA159)).